Consider the following 319-residue polypeptide: Ribonuclease Z (319 aa).

Zn(2+) is bound by residues histidine 62, histidine 64, aspartate 66, histidine 67, histidine 145, aspartate 215, and histidine 273. Aspartate 66 functions as the Proton acceptor in the catalytic mechanism.

Belongs to the RNase Z family. In terms of assembly, homodimer. It depends on Zn(2+) as a cofactor.

It catalyses the reaction Endonucleolytic cleavage of RNA, removing extra 3' nucleotides from tRNA precursor, generating 3' termini of tRNAs. A 3'-hydroxy group is left at the tRNA terminus and a 5'-phosphoryl group is left at the trailer molecule.. Its function is as follows. Zinc phosphodiesterase, which displays some tRNA 3'-processing endonuclease activity. Probably involved in tRNA maturation, by removing a 3'-trailer from precursor tRNA. This is Ribonuclease Z from Borrelia recurrentis (strain A1).